A 557-amino-acid chain; its full sequence is Protein NRT1/ PTR FAMILY 5.10 (557 aa).

2 helical membrane passes run 49–67 (FAYYGISSNLITYLTGPLG) and 79–99 (AWSGTASLLPLLGAFVADSFL). Position 104 is a phosphothreonine (Thr-104). Helical transmembrane passes span 105-125 (ILAASALYIVGLGVLTLSAMI), 144-164 (VITFFSALYLVALAQGGHKPC), 186-206 (SFFNWWYFGMCFGTLTTLWVL), 215-235 (WALGFGIPCIAMVVALVVLLL), 320-340 (APIWLTCLVYAVVFAQSPTFF), 365-385 (FISLSIVIFIPIYDRVLIPIA), 401-421 (IGTGIFLSFLAMVVAALVEMK), 443-463 (VWWLVPQYVLFGITDVFAMVG), 479-499 (VGLALYLSIFGIGNFLSSFMI), and 526-546 (YFYWLLACLSFIGLASYLYVA).

The protein belongs to the major facilitator superfamily. Proton-dependent oligopeptide transporter (POT/PTR) (TC 2.A.17) family. Expressed in shoots, roots and stems. Detected in leaves, flowers and siliques.

Its subcellular location is the membrane. This chain is Protein NRT1/ PTR FAMILY 5.10 (NPF5.10), found in Arabidopsis thaliana (Mouse-ear cress).